Reading from the N-terminus, the 455-residue chain is Ribulose bisphosphate carboxylase large chain (455 aa).

Lys5 carries the N6,N6,N6-trimethyllysine modification. The substrate site is built by Asn114 and Thr164. Lys166 serves as the catalytic Proton acceptor. Lys168 provides a ligand contact to substrate. Lys192, Asp194, and Glu195 together coordinate Mg(2+). Lys192 carries the N6-carboxylysine modification. His285 (proton acceptor) is an active-site residue. Arg286, His318, and Ser370 together coordinate substrate.

This sequence belongs to the RuBisCO large chain family. Type I subfamily. Heterohexadecamer of 8 large chains and 8 small chains; disulfide-linked. The disulfide link is formed within the large subunit homodimers. Mg(2+) serves as cofactor. Post-translationally, the disulfide bond which can form in the large chain dimeric partners within the hexadecamer appears to be associated with oxidative stress and protein turnover.

The protein localises to the plastid. Its subcellular location is the chloroplast. It carries out the reaction 2 (2R)-3-phosphoglycerate + 2 H(+) = D-ribulose 1,5-bisphosphate + CO2 + H2O. The catalysed reaction is D-ribulose 1,5-bisphosphate + O2 = 2-phosphoglycolate + (2R)-3-phosphoglycerate + 2 H(+). RuBisCO catalyzes two reactions: the carboxylation of D-ribulose 1,5-bisphosphate, the primary event in carbon dioxide fixation, as well as the oxidative fragmentation of the pentose substrate in the photorespiration process. Both reactions occur simultaneously and in competition at the same active site. The protein is Ribulose bisphosphate carboxylase large chain of Lupinus nanus (Sky lupine).